The sequence spans 1293 residues: Phosphoribosylformylglycinamidine synthase (1293 aa).

Residues 305 to 316 (GAATGSGGEIRD) and alanine 676 each bind ATP. Aspartate 677, glutamate 716, asparagine 720, and aspartate 884 together coordinate Mg(2+). Serine 886 lines the ATP pocket. Residues 1040–1293 (MAILREQGVN…MFRNARVKLG (254 aa)) form the Glutamine amidotransferase type-1 domain. Catalysis depends on cysteine 1133, which acts as the Nucleophile. Catalysis depends on residues histidine 1258 and glutamate 1260.

The protein in the N-terminal section; belongs to the FGAMS family. As to quaternary structure, monomer.

Its subcellular location is the cytoplasm. The enzyme catalyses N(2)-formyl-N(1)-(5-phospho-beta-D-ribosyl)glycinamide + L-glutamine + ATP + H2O = 2-formamido-N(1)-(5-O-phospho-beta-D-ribosyl)acetamidine + L-glutamate + ADP + phosphate + H(+). It participates in purine metabolism; IMP biosynthesis via de novo pathway; 5-amino-1-(5-phospho-D-ribosyl)imidazole from N(2)-formyl-N(1)-(5-phospho-D-ribosyl)glycinamide: step 1/2. Its function is as follows. Phosphoribosylformylglycinamidine synthase involved in the purines biosynthetic pathway. Catalyzes the ATP-dependent conversion of formylglycinamide ribonucleotide (FGAR) and glutamine to yield formylglycinamidine ribonucleotide (FGAM) and glutamate. The protein is Phosphoribosylformylglycinamidine synthase of Shewanella denitrificans (strain OS217 / ATCC BAA-1090 / DSM 15013).